Reading from the N-terminus, the 311-residue chain is Ribosomal RNA small subunit methyltransferase H (311 aa).

Residues 32–34, Asp-52, Phe-79, Asp-100, and Gln-107 contribute to the S-adenosyl-L-methionine site; that span reads AGH.

It belongs to the methyltransferase superfamily. RsmH family.

It localises to the cytoplasm. The catalysed reaction is cytidine(1402) in 16S rRNA + S-adenosyl-L-methionine = N(4)-methylcytidine(1402) in 16S rRNA + S-adenosyl-L-homocysteine + H(+). Functionally, specifically methylates the N4 position of cytidine in position 1402 (C1402) of 16S rRNA. This chain is Ribosomal RNA small subunit methyltransferase H, found in Staphylococcus aureus (strain bovine RF122 / ET3-1).